Consider the following 512-residue polypeptide: MVPTGQVAEKQACEEPRQDRELKSWRWLVFYLCFFGFMAQLRPGESFITPYLLERNFTKEQVTNEIIPMLPYSHLAVLVPIFLLTDYLRYKPVLVLQCLSFVCVWLLLLLGTSVVHMQLMEVFYSITMAARIAYSSYIFSLVQPSRYQRMASYSRAAVLLGVFISSVLGQVLVTLGGISTYMLNCISLGFILFSLSLSLFLKRPKRSLFFNRSALVQGALPCELDQMHPGPGRPEPRKLERMLGTCRDSFLVRMLSELVKNVRQPQLRLWCLWWVFNSAGYYLITYYVHVLWKITDSRLNYNGAVDAASTLLSAITAFTAGFVNIRWALWSKLVIASVIAIQAGLVFCMFQIPDIWVCYVTFVLFRGAYQFLVPIATFQIASSLSKELCALVFGINTFLATALKTSITLVVSDKRGLGLQVHQQFRIYFMYFLTLSIICLAWAGLDGLRYYRRGRHQPLAQAQALSPLEDSVQAISLQDGDLRRPQPSAPQLLPEDGSVEDGRADLRVEAKA.

Position 1 is an N-acetylmethionine (Met1). Topologically, residues 1 to 29 are cytoplasmic; it reads MVPTGQVAEKQACEEPRQDRELKSWRWLV. Residues 30 to 50 traverse the membrane as a helical segment; the sequence is FYLCFFGFMAQLRPGESFITP. Folate-binding residues include Ile48 and Thr49. The Extracellular segment spans residues 51–62; that stretch reads YLLERNFTKEQV. N-linked (GlcNAc...) asparagine glycosylation occurs at Asn56. The helical transmembrane segment at 63–85 threads the bilayer; that stretch reads TNEIIPMLPYSHLAVLVPIFLLT. The Cytoplasmic portion of the chain corresponds to 86-89; the sequence is DYLR. Residues 90 to 110 form a helical membrane-spanning segment; it reads YKPVLVLQCLSFVCVWLLLLL. Residues 111-114 are Extracellular-facing; that stretch reads GTSV. The chain crosses the membrane as a helical span at residues 115–137; the sequence is VHMQLMEVFYSITMAARIAYSSY. Positions 121 and 131 each coordinate folate. Residues 138-151 are Cytoplasmic-facing; that stretch reads IFSLVQPSRYQRMA. Residues 152 to 176 form a helical membrane-spanning segment; sequence SYSRAAVLLGVFISSVLGQVLVTLG. Folate is bound at residue Val162. Residues 177–181 lie on the Extracellular side of the membrane; the sequence is GISTY. A helical transmembrane segment spans residues 182-200; the sequence is MLNCISLGFILFSLSLSLF. The Cytoplasmic portion of the chain corresponds to 201–266; the sequence is LKRPKRSLFF…ELVKNVRQPQ (66 aa). A helical transmembrane segment spans residues 267–292; that stretch reads LRLWCLWWVFNSAGYYLITYYVHVLW. Folate-binding residues include Tyr281, Tyr282, and Tyr286. Topologically, residues 293–300 are extracellular; sequence KITDSRLN. The helical transmembrane segment at 301–323 threads the bilayer; sequence YNGAVDAASTLLSAITAFTAGFV. Residues 324 to 329 are Cytoplasmic-facing; the sequence is NIRWAL. The helical transmembrane segment at 330-350 threads the bilayer; it reads WSKLVIASVIAIQAGLVFCMF. Over 351 to 353 the chain is Extracellular; the sequence is QIP. A helical transmembrane segment spans residues 354–377; that stretch reads DIWVCYVTFVLFRGAYQFLVPIAT. Arg366 and Gln370 together coordinate folate. Residues 378-391 lie on the Cytoplasmic side of the membrane; it reads FQIASSLSKELCAL. The helical transmembrane segment at 392-415 threads the bilayer; it reads VFGINTFLATALKTSITLVVSDKR. Positions 400–412 are required for substrate-binding; it reads ATALKTSITLVVS. Residues 416 to 423 are Extracellular-facing; it reads GLGLQVHQ. The chain crosses the membrane as a helical span at residues 424–448; sequence QFRIYFMYFLTLSIICLAWAGLDGL. Over 449 to 512 the chain is Cytoplasmic; the sequence is RYYRRGRHQP…RADLRVEAKA (64 aa). A phosphoserine mark is found at Ser466, Ser471, and Ser476. The interval 479-512 is disordered; it reads DGDLRRPQPSAPQLLPEDGSVEDGRADLRVEAKA. Residues 500–512 show a composition bias toward basic and acidic residues; the sequence is EDGRADLRVEAKA.

It belongs to the reduced folate carrier (RFC) transporter (TC 2.A.48) family. Expressed in liver, heart, brain, spleen, lung and skeletal muscle.

It is found in the cell membrane. The protein resides in the apical cell membrane. It localises to the basolateral cell membrane. The enzyme catalyses 5-amino-1-(5-phospho-beta-D-ribosyl)imidazole-4-carboxamide(in) + (6S)-5-methyl-5,6,7,8-tetrahydrofolate(out) = 5-amino-1-(5-phospho-beta-D-ribosyl)imidazole-4-carboxamide(out) + (6S)-5-methyl-5,6,7,8-tetrahydrofolate(in). Functionally, antiporter that mediates the import of reduced folates, driven by the export of organic anions. Also acts as an importer of immunoreactive cyclic dinucleotides, but with a lower transporter activity. Mechanistically, acts as a secondary active transporter, which exports intracellular organic anions down their concentration gradients to facilitate the uptake of its substrates. Has high affinity for N5-methyltetrahydrofolate, the predominant circulating form of folate. Also mediates the import of antifolate drug methotrexate. 5-amino-4-imidazolecarboxamide riboside (AICAR), when phosphorylated to AICAR monophosphate, can serve as an organic anion for antiporter activity. The chain is Reduced folate transporter from Rattus norvegicus (Rat).